Consider the following 397-residue polypeptide: tRNA(Ile)-lysidine synthase (397 aa).

44-49 (SGGADS) is an ATP binding site.

Belongs to the tRNA(Ile)-lysidine synthase family.

The protein localises to the cytoplasm. The catalysed reaction is cytidine(34) in tRNA(Ile2) + L-lysine + ATP = lysidine(34) in tRNA(Ile2) + AMP + diphosphate + H(+). Its function is as follows. Ligates lysine onto the cytidine present at position 34 of the AUA codon-specific tRNA(Ile) that contains the anticodon CAU, in an ATP-dependent manner. Cytidine is converted to lysidine, thus changing the amino acid specificity of the tRNA from methionine to isoleucine. In Rhodopirellula baltica (strain DSM 10527 / NCIMB 13988 / SH1), this protein is tRNA(Ile)-lysidine synthase.